The primary structure comprises 330 residues: Delta-aminolevulinic acid dehydratase (330 aa).

The active-site Schiff-base intermediate with substrate is Lys203. The 5-aminolevulinate site is built by Arg213 and Arg224. Glu240 contributes to the Mg(2+) binding site. The active-site Schiff-base intermediate with substrate is Lys255. Ser281 and Tyr320 together coordinate 5-aminolevulinate.

This sequence belongs to the ALAD family. In terms of assembly, homooctamer.

The catalysed reaction is 2 5-aminolevulinate = porphobilinogen + 2 H2O + H(+). It participates in porphyrin-containing compound metabolism; protoporphyrin-IX biosynthesis; coproporphyrinogen-III from 5-aminolevulinate: step 1/4. Functionally, catalyzes an early step in the biosynthesis of tetrapyrroles. Binds two molecules of 5-aminolevulinate per subunit, each at a distinct site, and catalyzes their condensation to form porphobilinogen. In Streptomyces coelicolor (strain ATCC BAA-471 / A3(2) / M145), this protein is Delta-aminolevulinic acid dehydratase (hemB).